The chain runs to 139 residues: ATP synthase epsilon chain (139 aa).

This sequence belongs to the ATPase epsilon chain family. In terms of assembly, F-type ATPases have 2 components, CF(1) - the catalytic core - and CF(0) - the membrane proton channel. CF(1) has five subunits: alpha(3), beta(3), gamma(1), delta(1), epsilon(1). CF(0) has three main subunits: a, b and c.

The protein localises to the cell inner membrane. Its function is as follows. Produces ATP from ADP in the presence of a proton gradient across the membrane. This is ATP synthase epsilon chain from Alcanivorax borkumensis (strain ATCC 700651 / DSM 11573 / NCIMB 13689 / SK2).